The sequence spans 121 residues: NADH-ubiquinone oxidoreductase chain 3 (121 aa).

A run of 3 helical transmembrane segments spans residues 11 to 31 (ILIF…LSYF), 63 to 83 (FYLV…LFPW), and 90 to 110 (ISII…IGFI).

It belongs to the complex I subunit 3 family.

It localises to the mitochondrion membrane. It catalyses the reaction a ubiquinone + NADH + 5 H(+)(in) = a ubiquinol + NAD(+) + 4 H(+)(out). Functionally, core subunit of the mitochondrial membrane respiratory chain NADH dehydrogenase (Complex I) that is believed to belong to the minimal assembly required for catalysis. Complex I functions in the transfer of electrons from NADH to the respiratory chain. The immediate electron acceptor for the enzyme is believed to be ubiquinone. The chain is NADH-ubiquinone oxidoreductase chain 3 (ND3) from Chondrus crispus (Carrageen Irish moss).